The primary structure comprises 332 residues: Phosphate acetyltransferase (332 aa).

Belongs to the phosphate acetyltransferase and butyryltransferase family.

The protein resides in the cytoplasm. The enzyme catalyses acetyl-CoA + phosphate = acetyl phosphate + CoA. Its pathway is metabolic intermediate biosynthesis; acetyl-CoA biosynthesis; acetyl-CoA from acetate: step 2/2. This Acetivibrio thermocellus (strain ATCC 27405 / DSM 1237 / JCM 9322 / NBRC 103400 / NCIMB 10682 / NRRL B-4536 / VPI 7372) (Clostridium thermocellum) protein is Phosphate acetyltransferase (pta).